The primary structure comprises 200 residues: dTTP/UTP pyrophosphatase (200 aa).

Asp-80 functions as the Proton acceptor in the catalytic mechanism.

It belongs to the Maf family. YhdE subfamily. Requires a divalent metal cation as cofactor.

It is found in the cytoplasm. The catalysed reaction is dTTP + H2O = dTMP + diphosphate + H(+). It carries out the reaction UTP + H2O = UMP + diphosphate + H(+). Nucleoside triphosphate pyrophosphatase that hydrolyzes dTTP and UTP. May have a dual role in cell division arrest and in preventing the incorporation of modified nucleotides into cellular nucleic acids. This chain is dTTP/UTP pyrophosphatase, found in Pasteurella multocida (strain Pm70).